Here is a 293-residue protein sequence, read N- to C-terminus: Nucleotide-binding protein HRM2_27900 (293 aa).

An ATP-binding site is contributed by 11 to 18 (GLSGSGKS). GTP is bound at residue 62-65 (DIRA).

This sequence belongs to the RapZ-like family.

In terms of biological role, displays ATPase and GTPase activities. The polypeptide is Nucleotide-binding protein HRM2_27900 (Desulforapulum autotrophicum (strain ATCC 43914 / DSM 3382 / VKM B-1955 / HRM2) (Desulfobacterium autotrophicum)).